The chain runs to 243 residues: Ribonuclease 3 (243 aa).

Residues 10–146 (VNRFRKRFDT…FIGALYLDQG (137 aa)) enclose the RNase III domain. Mg(2+) is bound at residue glutamate 59. The active site involves aspartate 63. Mg(2+) is bound by residues aspartate 132 and glutamate 135. The active site involves glutamate 135. The 70-residue stretch at 172-241 (DFKTQFQEYV…AESAYKQLKQ (70 aa)) folds into the DRBM domain. The segment covering 219 to 231 (GKGKTKKESEQRA) has biased composition (basic and acidic residues). Residues 219-243 (GKGKTKKESEQRAAESAYKQLKQIK) form a disordered region.

Belongs to the ribonuclease III family. Homodimer. Mg(2+) serves as cofactor.

It is found in the cytoplasm. The catalysed reaction is Endonucleolytic cleavage to 5'-phosphomonoester.. In terms of biological role, digests double-stranded RNA. Involved in the processing of primary rRNA transcript to yield the immediate precursors to the large and small rRNAs (23S and 16S). Processes some mRNAs, and tRNAs when they are encoded in the rRNA operon. Processes pre-crRNA and tracrRNA of type II CRISPR loci if present in the organism. This is Ribonuclease 3 from Staphylococcus aureus (strain USA300).